Reading from the N-terminus, the 1559-residue chain is Fatty acid synthase alpha subunit stcJ (1559 aa).

In terms of domain architecture, Carrier spans 68 to 147 (DTPLTAIFII…AALGEVSLGP (80 aa)). Serine 106 carries the O-(pantetheine 4'-phosphoryl)serine modification. Residues 457 to 693 (NHTYLITGAG…SLLLTPQLAT (237 aa)) form a ketoreductase (KR) domain region. The region spanning 873-1327 (REVFQEIVLE…QKEAQLVGVH (455 aa)) is the Ketosynthase family 3 (KS3) domain. Residue cysteine 1058 is the For beta-ketoacyl synthase activity of the active site. A compositionally biased stretch (basic and acidic residues) spans 1105-1117 (VRDEQARGREPGE). The interval 1105 to 1125 (VRDEQARGREPGEMSRPTAAS) is disordered. Catalysis depends on for beta-ketoacyl synthase activity residues histidine 1212 and histidine 1253. Aspartate 1432 is a binding site for Mg(2+). Residues 1432 to 1434 (DTV), 1480 to 1490 (EAVFKCLQTVS), 1504 to 1506 (RVQ), and 1532 to 1534 (LSY) each bind acetyl-CoA. Serine 1533 is a binding site for Mg(2+).

Belongs to the thiolase-like superfamily. Fungal fatty acid synthetase subunit alpha family. In terms of assembly, [Alpha(6)beta(6)] hexamers of two multifunctional subunits (alpha and beta).

The catalysed reaction is acetyl-CoA + n malonyl-CoA + 2n NADPH + 4n H(+) = a long-chain-acyl-CoA + n CoA + n CO2 + 2n NADP(+).. The enzyme catalyses a fatty acyl-[ACP] + malonyl-[ACP] + H(+) = a 3-oxoacyl-[ACP] + holo-[ACP] + CO2. It catalyses the reaction a (3R)-hydroxyacyl-[ACP] + NADP(+) = a 3-oxoacyl-[ACP] + NADPH + H(+). Its pathway is mycotoxin biosynthesis; sterigmatocystin biosynthesis. Functionally, fatty acid synthase alpha subunit; part of the gene cluster that mediates the biosynthesis of sterigmatocystin (ST), a polyketide-derived furanocoumarin which is part of the most toxic and carcinogenic compounds among the known mycotoxins. The first step in the biosynthesis of sterigmatocystin is the production of hexanoate by the fatty acid synthase (FAS) units stcJ and stcK. The polyketide backbone is assembled by the non-reducing polyketide synthase stcA by condensation of the starter hexanoyl-CoA and 7 malonyl-CoA extender units followed by cyclization and release of norsolorinic acid. Norsolorinic acid is the first stable intermediate in the biosynthesis of sterigmatocystin and is converted into averantin (AVN) by the ketoreductase stcE which reduces the hexanoate ketone to an alcohol. Averantin is then oxidized into 5'-hydroxyaverantin (HAVN) by the cytochrome P450 monooxygenase stcF. 5'-hydroxyaverantin is further converted to 5'-oxyaverantin (OAVN) by the 5'-hydroxyaverantin dehydrogenase stcG. The next step is the conversion of OAVN into averufin (AVF) which is catalyzed by a yet to be identified enzyme. The cytochrome P450 monooxygenase stcB and the flavin-binding monooxygenase stcW are both required for the conversion of averufin to 1-hydroxyversicolorone. The esterase stcI probably catalyzes the formation of versiconal hemiacetal acetate from 1-hydroxyversicolorone. The oxydoreductase stcN then probably catalyzes the biosynthetic step from versiconal to versicolorin B (VERB). The next step is performed by the versicolorin B desaturase stcL to produce versicolorin A (VERA). The ketoreductase stcU and the cytochrome P450 monooxygenase stcS are involved in the conversion of versicolorin A to demethylsterigmatocystin. The Baeyer-Villiger oxidas stcQ and the reductase stcR might be involved in the biosynthetic step from versicolorin A to demethylsterigmatocystin. The final step in the biosynthesis of sterigmatocystin is the methylation of demethylsterigmatocystin catalyzed by the methyltransferase stcP. This is Fatty acid synthase alpha subunit stcJ from Emericella nidulans (strain FGSC A4 / ATCC 38163 / CBS 112.46 / NRRL 194 / M139) (Aspergillus nidulans).